A 588-amino-acid chain; its full sequence is Lamin-B1 (588 aa).

Polar residues predominate over residues 1-12 (MATATPVQQQRA). A disordered region spans residues 1–34 (MATATPVQQQRAGSRASAPATPLSPTRLSRLQEK). Position 2 is an N-acetylalanine (Ala2). Positions 2–35 (ATATPVQQQRAGSRASAPATPLSPTRLSRLQEKE) are head. 2 positions are modified to phosphothreonine: Thr3 and Thr5. Position 15 is an omega-N-methylarginine (Arg15). Ser17 is subject to Phosphoserine. A Phosphothreonine modification is found at Thr21. Ser24 carries the phosphoserine modification. Phosphothreonine is present on Thr26. Ser29 is modified (phosphoserine). One can recognise an IF rod domain in the interval 33 to 389 (EKEELRELND…KLLEGEEERL (357 aa)). Residues 36–70 (ELRELNDRLAVYIDKVRSLETENSALQLQVTEREE) form a coil 1A region. The interval 71–82 (VRGRELTGLKAL) is linker 1. Positions 83–216 (YETELADARR…EFRKNMYEEE (134 aa)) are coil 1B. Lys103 participates in a covalent cross-link: Glycyl lysine isopeptide (Lys-Gly) (interchain with G-Cter in SUMO2). N6-acetyllysine is present on Lys112. Lys124 is covalently cross-linked (Glycyl lysine isopeptide (Lys-Gly) (interchain with G-Cter in SUMO2)). The residue at position 127 (Ser127) is a Phosphoserine. A Glycyl lysine isopeptide (Lys-Gly) (interchain with G-Cter in SUMO2) cross-link involves residue Lys146. Residue Lys158 is modified to N6-acetyllysine; alternate. Lys158 participates in a covalent cross-link: Glycyl lysine isopeptide (Lys-Gly) (interchain with G-Cter in SUMO2); alternate. Position 159 is a phosphoserine (Ser159). Lys182 participates in a covalent cross-link: Glycyl lysine isopeptide (Lys-Gly) (interchain with G-Cter in SUMO2). A phosphoserine mark is found at Ser201 and Ser233. The linker 2 stretch occupies residues 217–244 (INETRRKHETRLVEVDSGRQIEYEYKLA). Glycyl lysine isopeptide (Lys-Gly) (interchain with G-Cter in SUMO2) cross-links involve residues Lys242 and Lys262. The coil 2 stretch occupies residues 245–387 (QALHEMREQH…YRKLLEGEEE (143 aa)). Lys272 carries the post-translational modification N6-acetyllysine; alternate. A Glycyl lysine isopeptide (Lys-Gly) (interchain with G-Cter in SUMO2); alternate cross-link involves residue Lys272. 2 positions are modified to phosphoserine: Ser279 and Ser303. A Glycyl lysine isopeptide (Lys-Gly) (interchain with G-Cter in SUMO2) cross-link involves residue Lys313. The residue at position 331 (Lys331) is an N6-acetyllysine; alternate. Lys331 is covalently cross-linked (Glycyl lysine isopeptide (Lys-Gly) (interchain with G-Cter in SUMO2); alternate). Phosphoserine is present on residues Ser376 and Ser394. Positions 388–588 (RLKLSPSPSS…RASNKSCAIM (201 aa)) are tail. Low complexity predominate over residues 391-410 (LSPSPSSRVTVSRASSSRSV). Positions 391–433 (LSPSPSSRVTVSRASSSRSVRTTRGKRKRVDVEESEASSSVSI) are disordered. Thr400 carries O-linked (GlcNAc) threonine glycosylation. Arg414 is modified (omega-N-methylarginine). Positions 416 to 421 (KRKRVD) match the Nuclear localization signal motif. Residues 431–547 (VSISHSASAT…EEVAQRSTVF (117 aa)) enclose the LTD domain. Residue Lys484 is modified to N6-acetyllysine. Lys533 participates in a covalent cross-link: Glycyl lysine isopeptide (Lys-Gly) (interchain with G-Cter in SUMO2). Ser535 carries the post-translational modification Phosphoserine. Lys548 is covalently cross-linked (Glycyl lysine isopeptide (Lys-Gly) (interchain with G-Cter in SUMO2)). Cysteine methyl ester is present on Cys585. Cys585 is lipidated: S-farnesyl cysteine. Positions 586–588 (AIM) are cleaved as a propeptide — removed in mature form.

The protein belongs to the intermediate filament family. In terms of assembly, homodimer. Lamin dimers then assemble into dimeric head-to-tail polymers. Ultimately, two head-to-tail polymers assemble laterally into a protofilament with a uniformly shaped rod of 3.5 nm in diameter. Interacts with SPAG4 and SEPT12. In terms of processing, B-type lamins undergo a series of modifications, such as farnesylation and phosphorylation. Increased phosphorylation of the lamins occurs before envelope disintegration and probably plays a role in regulating lamin associations. Post-translationally, phosphorylation plays a key role in lamin organization, subcellular localization and nuclear envelope disintegration. Phosphorylation by CDK1 at Ser-24 and Ser-394 at the onset of mitosis drives lamin disassembly and nuclear envelope breakdown.

The protein localises to the nucleus lamina. In terms of biological role, lamins are intermediate filament proteins that assemble into a filamentous meshwork, and which constitute the major components of the nuclear lamina, a fibrous layer on the nucleoplasmic side of the inner nuclear membrane. Lamins provide a framework for the nuclear envelope, bridging the nuclear envelope and chromatin, thereby playing an important role in nuclear assembly, chromatin organization, nuclear membrane and telomere dynamics. The structural integrity of the lamina is strictly controlled by the cell cycle, as seen by the disintegration and formation of the nuclear envelope in prophase and telophase, respectively. The chain is Lamin-B1 (Lmnb1) from Mus musculus (Mouse).